The following is a 407-amino-acid chain: Betaine--homocysteine S-methyltransferase 1 (407 aa).

The 304-residue stretch at arginine 11 to leucine 314 folds into the Hcy-binding domain. Residues lysine 40, lysine 93, and lysine 98 each carry the N6-succinyllysine modification. A Zn(2+)-binding site is contributed by cysteine 217. N6-succinyllysine occurs at positions 232 and 241. Zn(2+)-binding residues include cysteine 299 and cysteine 300. Serine 330 carries the post-translational modification Phosphoserine. An N6-succinyllysine mark is found at lysine 340 and lysine 377.

Homotetramer. The cofactor is Zn(2+). Highly expressed in liver and kidney (at protein level). Expressed at lower levels in testis, lung, cerebellum, skeletal muscle and pancreas (at protein level).

Its subcellular location is the cytoplasm. It is found in the cytosol. The protein resides in the nucleus. The enzyme catalyses L-homocysteine + glycine betaine = N,N-dimethylglycine + L-methionine. The protein operates within amine and polyamine degradation; betaine degradation; sarcosine from betaine: step 1/2. Its pathway is amino-acid biosynthesis; L-methionine biosynthesis via de novo pathway; L-methionine from L-homocysteine (BhmT route): step 1/1. In terms of biological role, involved in the regulation of homocysteine metabolism. Converts betaine and homocysteine to dimethylglycine and methionine, respectively. This reaction is also required for the irreversible oxidation of choline. The protein is Betaine--homocysteine S-methyltransferase 1 of Rattus norvegicus (Rat).